The sequence spans 710 residues: Choline transporter-like protein 4 (710 aa).

Topologically, residues 1 to 34 (MGGKQRDEDDEAYGKPVKYDPSFRGPIKNRSCTD) are cytoplasmic. The chain crosses the membrane as a helical span at residues 35-55 (VICCVLFLLFILGYIVVGIVA). Residues 56–229 (WLYGDPRQVL…KIFEDFAQSW (174 aa)) lie on the Extracellular side of the membrane. N-linked (GlcNAc...) asparagine glycans are attached at residues N69, N155, and N197. The helical transmembrane segment at 230 to 250 (YWILVALGVALVLSLLFILLL) threads the bilayer. Topologically, residues 251–252 (RL) are cytoplasmic. A helical transmembrane segment spans residues 253–273 (VAGPLVLVLILGVLGVLAYGI). The Extracellular segment spans residues 274-309 (YYCWEEYRVLRDKGASISQLGFTTNLSAYQSVQETW). N298 is a glycosylation site (N-linked (GlcNAc...) asparagine). A helical transmembrane segment spans residues 310–330 (LAALIVLAVLEAILLLMLIFL). At 331–358 (RQRIRIAIALLKEASKAVGQMMSTMFYP) the chain is on the cytoplasmic side. Residues 359–379 (LVTFVLLLICIAYWAMTALYL) form a helical membrane-spanning segment. Topologically, residues 380–455 (ATSGQPQYVL…GVLGLFWTLN (76 aa)) are extracellular. Residues N393, N405, and N416 are each glycosylated (N-linked (GlcNAc...) asparagine). A helical transmembrane segment spans residues 456-476 (WVLALGQCVLAGAFASFYWAF). The Cytoplasmic segment spans residues 477 to 501 (HKPQDIPTFPLISAFIRTLRYHTGS). A helical transmembrane segment spans residues 502–522 (LAFGALILTLVQIARVILEYI). Residues 523–560 (DHKLRGVQNPVARCIMCCFKCCLWCLEKFIKFLNRNAY) are Extracellular-facing. The helical transmembrane segment at 561 to 581 (IMIAIYGKNFCVSAKNAFMLL) threads the bilayer. Topologically, residues 582–597 (MRNIVRVVVLDKVTDL) are cytoplasmic. Residues 598-618 (LLFFGKLLVVGGVGVLSFFFF) form a helical membrane-spanning segment. Residues 619-638 (SGRIPGLGKDFKSPHLNYYW) lie on the Extracellular side of the membrane. A helical transmembrane segment spans residues 639–659 (LPIMTSILGAYVIASGFFSVF). The Cytoplasmic portion of the chain corresponds to 660 to 710 (GMCVDTLFLCFLEDLERNNGSLDRPYYMSKSLLKILGKKNEAPPDNKKRKK).

It belongs to the CTL (choline transporter-like) family. In terms of processing, N-glycosylated; N-glycosylation of Asn-69, Asn-155 and Asn-393 is required for a proper thiamine pyrophosphate uptake. In terms of tissue distribution, highly expressed in colon, also detected in prostate, trachea and lung. Isoform 3 is also expressed in colon but a lower levels. As to expression, expressed in colon at low levels.

The protein resides in the membrane. Its subcellular location is the apical cell membrane. It catalyses the reaction choline(out) + n H(+)(in) = choline(in) + n H(+)(out). The enzyme catalyses thiamine diphosphate(out) = thiamine diphosphate(in). Choline transporter that plays a role in the choline-acetylcholine system and is required to the efferent innervation of hair cells in the olivocochlear bundle for the maintenance of physiological function of outer hair cells and the protection of hair cells from acoustic injury. Also described as a thiamine pyrophosphate transporter in colon, may mediate the absorption of microbiota-generated thiamine pyrophosphate and contribute to host thiamine (vitamin B1) homeostasis. Functionally, also has thiamine pyrophosphate transporter activity. This is Choline transporter-like protein 4 from Homo sapiens (Human).